A 316-amino-acid chain; its full sequence is Probable cell division protein WhiA (316 aa).

Positions 275 to 309 (TLKELGEMVESGKISKSGINHRLRKLDQIAEQLRN) form a DNA-binding region, H-T-H motif.

Belongs to the WhiA family.

Its function is as follows. Involved in cell division and chromosome segregation. In Bacillus pumilus (strain SAFR-032), this protein is Probable cell division protein WhiA.